We begin with the raw amino-acid sequence, 238 residues long: ATP-dependent dethiobiotin synthetase BioD (238 aa).

Glutamate 12–valine 17 contributes to the ATP binding site. Residue threonine 16 participates in Mg(2+) binding. Lysine 37 is an active-site residue. Threonine 41 contacts substrate. Residues aspartate 50, glutamate 109–glycine 112, glycine 170–serine 171, and proline 200–glycine 202 contribute to the ATP site. Mg(2+) contacts are provided by aspartate 50 and glutamate 109.

The protein belongs to the dethiobiotin synthetase family. As to quaternary structure, homodimer. Requires Mg(2+) as cofactor.

The protein localises to the cytoplasm. The catalysed reaction is (7R,8S)-7,8-diammoniononanoate + CO2 + ATP = (4R,5S)-dethiobiotin + ADP + phosphate + 3 H(+). Its pathway is cofactor biosynthesis; biotin biosynthesis; biotin from 7,8-diaminononanoate: step 1/2. In terms of biological role, catalyzes a mechanistically unusual reaction, the ATP-dependent insertion of CO2 between the N7 and N8 nitrogen atoms of 7,8-diaminopelargonic acid (DAPA, also called 7,8-diammoniononanoate) to form a ureido ring. This chain is ATP-dependent dethiobiotin synthetase BioD, found in Parafrankia sp. (strain EAN1pec).